Consider the following 188-residue polypeptide: UPF0200 protein YG5714_1176 (188 aa).

Position 15 to 22 (15 to 22 (GMPGSGKS)) interacts with ATP.

Belongs to the UPF0200 family.

This chain is UPF0200 protein YG5714_1176, found in Saccharolobus islandicus (strain Y.G.57.14 / Yellowstone #1) (Sulfolobus islandicus).